We begin with the raw amino-acid sequence, 465 residues long: UDP-N-acetylmuramoylalanine--D-glutamate ligase (465 aa).

Position 115-121 (115-121 (GTDGKTT)) interacts with ATP.

This sequence belongs to the MurCDEF family.

Its subcellular location is the cytoplasm. The enzyme catalyses UDP-N-acetyl-alpha-D-muramoyl-L-alanine + D-glutamate + ATP = UDP-N-acetyl-alpha-D-muramoyl-L-alanyl-D-glutamate + ADP + phosphate + H(+). The protein operates within cell wall biogenesis; peptidoglycan biosynthesis. Cell wall formation. Catalyzes the addition of glutamate to the nucleotide precursor UDP-N-acetylmuramoyl-L-alanine (UMA). The protein is UDP-N-acetylmuramoylalanine--D-glutamate ligase of Chlorobaculum tepidum (strain ATCC 49652 / DSM 12025 / NBRC 103806 / TLS) (Chlorobium tepidum).